Consider the following 393-residue polypeptide: Methylthioribose kinase (393 aa).

ATP contacts are provided by residues asparagine 38, lysine 53, and glutamate 107–leucine 109. Aspartate 225 is a binding site for substrate. An ATP-binding site is contributed by aspartate 242–glutamate 244. Arginine 332 is a binding site for substrate.

This sequence belongs to the methylthioribose kinase family. Homodimer.

The catalysed reaction is 5-(methylsulfanyl)-D-ribose + ATP = 5-(methylsulfanyl)-alpha-D-ribose 1-phosphate + ADP + H(+). It functions in the pathway amino-acid biosynthesis; L-methionine biosynthesis via salvage pathway; S-methyl-5-thio-alpha-D-ribose 1-phosphate from S-methyl-5'-thioadenosine (hydrolase route): step 2/2. Catalyzes the phosphorylation of methylthioribose into methylthioribose-1-phosphate. The sequence is that of Methylthioribose kinase from Bacillus cereus (strain ATCC 10987 / NRS 248).